The sequence spans 191 residues: MAKKYGMIHDENLCIGCQACNIACRSENKIPDSVYRLQVWVQGPKKLPDGTLSFNYHRQSCVQCENTPCVSVCPTKASYVNEDGIVSVNVDLCVGCLYCIAACPYQARYVDPVTKAPDKCNFCKDTRLARGEEPACVTVCPTDALTFGDMSDPKSKINKVLASKPTLRPKESLGTKPKLFIVPNKRGGIES.

4Fe-4S ferredoxin-type domains are found at residues 5-34 (YGMI…PDSV), 50-83 (GTLS…VNED), and 84-113 (GIVS…VDPV). Cysteine 14, cysteine 17, cysteine 20, cysteine 24, cysteine 61, cysteine 64, cysteine 69, cysteine 73, cysteine 93, cysteine 96, cysteine 99, cysteine 103, cysteine 120, cysteine 123, cysteine 136, and cysteine 140 together coordinate [4Fe-4S] cluster.

As to quaternary structure, functional polysulfide reductase is made up of three different (A, B, and C) subunits.

Functionally, component of the phosphorylative electron transport system with polysulfide as the terminal acceptor. This Wolinella succinogenes (strain ATCC 29543 / DSM 1740 / CCUG 13145 / JCM 31913 / LMG 7466 / NCTC 11488 / FDC 602W) (Vibrio succinogenes) protein is Polysulfide reductase chain B (psrB).